A 305-amino-acid chain; its full sequence is MWNLRITPLSFGAACQGIFTSTLLLSCVTVPLVCTIVYDSCLYMDINASRALANVYDLPDDFFPKIDDLVRDAKDALEPYWKSDSIKKHVLIATHFVDLIEDFWQTTQGMHEIAESLRAVIPPTTTPVPPGYLIQHEEAEEIPLGDLFKHQEERIVSFQPDYPITARIHAHLKAYAKINEESLDRARRLLWWHYNCLLWGEAQVTNYISRLRTWLSTPEKYRGRDAPTIEAITRPIQVAQGGRKTTTGTRKPRGLEPRRRKVKTTVVYGRRRSKSRERRAPTPQRAGSPLPRSSSSHHRSPSPRK.

The N-terminal stretch at 1–19 (MWNLRITPLSFGAACQGIF) is a signal peptide. The disordered stretch occupies residues 226-305 (APTIEAITRP…SHHRSPSPRK (80 aa)). 2 stretches are compositionally biased toward basic residues: residues 258–277 (RRRK…KSRE) and 295–305 (SSHHRSPSPRK). Positions 273–305 (SKSRERRAPTPQRAGSPLPRSSSSHHRSPSPRK) are excised as a propeptide.

It belongs to the avihepadnavirus precore antigen family. As to quaternary structure, homodimerizes.

It is found in the secreted. In terms of biological role, may regulate immune response to the intracellular capsid in acting as a T-cell tolerogen, by having an immunoregulatory effect which prevents destruction of infected cells by cytotoxic T-cells. The protein is External core antigen (C) of Duck hepatitis B virus (strain United States/DHBV-16) (DHBV).